The primary structure comprises 367 residues: uncharacterized protein (367 aa).

This is an uncharacterized protein from Arabidopsis thaliana (Mouse-ear cress).